We begin with the raw amino-acid sequence, 447 residues long: Signal recognition particle 54 kDa protein (447 aa).

GTP is bound by residues Gly103–Thr110, Asp185–Arg189, and Thr245–Asp248.

It belongs to the GTP-binding SRP family. SRP54 subfamily. Part of the signal recognition particle protein translocation system, which is composed of SRP and FtsY. Archaeal SRP consists of a 7S RNA molecule of 300 nucleotides and two protein subunits: SRP54 and SRP19.

The protein localises to the cytoplasm. It catalyses the reaction GTP + H2O = GDP + phosphate + H(+). Its function is as follows. Involved in targeting and insertion of nascent membrane proteins into the cytoplasmic membrane. Binds to the hydrophobic signal sequence of the ribosome-nascent chain (RNC) as it emerges from the ribosomes. The SRP-RNC complex is then targeted to the cytoplasmic membrane where it interacts with the SRP receptor FtsY. The polypeptide is Signal recognition particle 54 kDa protein (Saccharolobus solfataricus (strain ATCC 35092 / DSM 1617 / JCM 11322 / P2) (Sulfolobus solfataricus)).